Consider the following 309-residue polypeptide: Sporulation sigma-E factor-processing peptidase (309 aa).

The next 5 membrane-spanning stretches (helical) occupy residues 7–27 (VIWL…AFIL), 36–55 (LVGG…TPFS), 61–78 (PAGK…TFGF), 88–105 (LFSF…IIGA), and 130–147 (PISW…WFFS). Asp183 is a catalytic residue.

The protein belongs to the peptidase U4 family. As to quaternary structure, self-associates. Interacts with SigE. Interacts with SpoIIR.

It localises to the cell membrane. Functionally, probable aspartic protease that is responsible for the proteolytic cleavage of the RNA polymerase sigma E factor (SigE/spoIIGB) to yield the active peptide in the mother cell during sporulation. Responds to a signal from the forespore that is triggered by the extracellular signal protein SpoIIR. This chain is Sporulation sigma-E factor-processing peptidase (spoIIGA), found in Bacillus subtilis (strain 168).